A 642-amino-acid polypeptide reads, in one-letter code: Cysteine-rich receptor-like protein kinase 27 (642 aa).

Positions 1 to 24 (MASTSIMLSSFFSFFFLTFFVTYA) are cleaved as a signal peptide. Residues 25–274 (QQNVTVHTIC…QGKSKDRSKT (250 aa)) lie on the Extracellular side of the membrane. N-linked (GlcNAc...) asparagine glycans are attached at residues Asn-27, Asn-40, Asn-44, Asn-70, Asn-145, Asn-173, and Asn-258. Gnk2-homologous domains are found at residues 29 to 130 (TVHT…SRII) and 136 to 240 (PVPF…VYPF). Residues 275–295 (LIFAVVPIVAIILGLVFLFIY) traverse the membrane as a helical segment. Residues 296–642 (LKRRRKKKTL…DVSLTDLSAR (347 aa)) are Cytoplasmic-facing. Positions 333-620 (FSLTNKIGEG…QLPKPSQPGF (288 aa)) constitute a Protein kinase domain. Residues 339 to 347 (IGEGGFGVV) and Lys-361 each bind ATP. Tyr-406 carries the phosphotyrosine modification. Asp-458 functions as the Proton acceptor in the catalytic mechanism. At Ser-462 the chain carries Phosphoserine. The residue at position 498 (Thr-498) is a Phosphothreonine. Tyr-506 is modified (phosphotyrosine).

The protein belongs to the protein kinase superfamily. Ser/Thr protein kinase family. CRK subfamily.

Its subcellular location is the membrane. It carries out the reaction L-seryl-[protein] + ATP = O-phospho-L-seryl-[protein] + ADP + H(+). The enzyme catalyses L-threonyl-[protein] + ATP = O-phospho-L-threonyl-[protein] + ADP + H(+). This chain is Cysteine-rich receptor-like protein kinase 27 (CRK27), found in Arabidopsis thaliana (Mouse-ear cress).